The following is a 427-amino-acid chain: N-acylglucosamine 2-epimerase (427 aa).

A leucine-zipper region spans residues 195–216 (LLNLVEQLGEADEELAGKYAEL).

This sequence belongs to the N-acylglucosamine 2-epimerase family. As to quaternary structure, homodimer. Forms a heterodimer with renin and inhibits its activity.

The enzyme catalyses an N-acyl-D-glucosamine = an N-acyl-D-mannosamine. Its pathway is amino-sugar metabolism; N-acetylneuraminate degradation. Inhibited by N-ethylmaleimide, 5,5'-dithiobis-2-nitrobenzoate and iodoacetic acid. Catalyzes the interconversion of N-acetylglucosamine to N-acetylmannosamine. Involved in the N-glycolylneuraminic acid (Neu5Gc) degradation pathway: although human is not able to catalyze formation of Neu5Gc due to the inactive CMAHP enzyme, Neu5Gc is present in food and must be degraded. This chain is N-acylglucosamine 2-epimerase (RENBP), found in Homo sapiens (Human).